A 468-amino-acid polypeptide reads, in one-letter code: Kynureninase 2 (468 aa).

Pyridoxal 5'-phosphate contacts are provided by residues leucine 134, threonine 135, 162 to 165 (FPSD), aspartate 247, histidine 250, and tyrosine 272. The residue at position 273 (lysine 273) is an N6-(pyridoxal phosphate)lysine. 2 residues coordinate pyridoxal 5'-phosphate: tryptophan 312 and asparagine 340.

This sequence belongs to the kynureninase family. In terms of assembly, homodimer. The cofactor is pyridoxal 5'-phosphate.

The protein localises to the cytoplasm. It carries out the reaction L-kynurenine + H2O = anthranilate + L-alanine + H(+). The enzyme catalyses 3-hydroxy-L-kynurenine + H2O = 3-hydroxyanthranilate + L-alanine + H(+). It participates in amino-acid degradation; L-kynurenine degradation; L-alanine and anthranilate from L-kynurenine: step 1/1. Its pathway is cofactor biosynthesis; NAD(+) biosynthesis; quinolinate from L-kynurenine: step 2/3. Its function is as follows. Catalyzes the cleavage of L-kynurenine (L-Kyn) and L-3-hydroxykynurenine (L-3OHKyn) into anthranilic acid (AA) and 3-hydroxyanthranilic acid (3-OHAA), respectively. The sequence is that of Kynureninase 2 (bna5-2) from Aspergillus oryzae (strain ATCC 42149 / RIB 40) (Yellow koji mold).